The primary structure comprises 453 residues: Chromosomal replication initiator protein DnaA (453 aa).

Positions 1 to 74 (MKEKQFWNRI…GFEIYDAEIT (74 aa)) are domain I, interacts with DnaA modulators. The segment at 74-113 (TPHYIFTKPQDTTSSQVEEATNLTLYDYSPKLVSIPYSDT) is domain II. Residues 114–331 (GLKEKYTFDN…GAINDITLIA (218 aa)) are domain III, AAA+ region. G158, G160, K161, and T162 together coordinate ATP. Residues 332–453 (RVKKIKDITI…EIESIKKKIK (122 aa)) form a domain IV, binds dsDNA region.

It belongs to the DnaA family. In terms of assembly, oligomerizes as a right-handed, spiral filament on DNA at oriC.

The protein resides in the cytoplasm. Its function is as follows. Plays an essential role in the initiation and regulation of chromosomal replication. ATP-DnaA binds to the origin of replication (oriC) to initiate formation of the DNA replication initiation complex once per cell cycle. Binds the DnaA box (a 9 base pair repeat at the origin) and separates the double-stranded (ds)DNA. Forms a right-handed helical filament on oriC DNA; dsDNA binds to the exterior of the filament while single-stranded (ss)DNA is stabiized in the filament's interior. The ATP-DnaA-oriC complex binds and stabilizes one strand of the AT-rich DNA unwinding element (DUE), permitting loading of DNA polymerase. After initiation quickly degrades to an ADP-DnaA complex that is not apt for DNA replication. Binds acidic phospholipids. In Streptococcus pneumoniae (strain Taiwan19F-14), this protein is Chromosomal replication initiator protein DnaA.